The following is a 263-amino-acid chain: Probable ABC transporter permease protein ycf63 (263 aa).

6 helical membrane-spanning segments follow: residues 43–63 (LVGP…SMVF), 82–102 (AVIV…VIIA), 136–156 (LVFP…TISL), 159–179 (SIAI…SIFL), 199–219 (LCFG…SSGG), and 230–250 (SVVT…YFMF).

Belongs to the MlaE permease family.

The protein localises to the plastid. It is found in the chloroplast membrane. Its function is as follows. Could be part of an ABC transporter complex. The chain is Probable ABC transporter permease protein ycf63 (ycf63) from Porphyra purpurea (Red seaweed).